The primary structure comprises 187 residues: MINAGELRKNTKLMIEGEPYVMLEVQFVKPGKGVAFYKCKMRNLMTGSLLERTYRSGDTFEPAALEEKKMQYLYAQGDEYYFMDVKTYDQVMLTEEAVGDAKEYLIDNLEMDILFFENKAIGITLPNFVELEVTQADPWVKGDSVAGDSKPVTLQTGMVLQVPPFVEEGTIIQVDTRTGAYVTRVKK.

Belongs to the elongation factor P family.

Its subcellular location is the cytoplasm. The protein operates within protein biosynthesis; polypeptide chain elongation. In terms of biological role, involved in peptide bond synthesis. Stimulates efficient translation and peptide-bond synthesis on native or reconstituted 70S ribosomes in vitro. Probably functions indirectly by altering the affinity of the ribosome for aminoacyl-tRNA, thus increasing their reactivity as acceptors for peptidyl transferase. The polypeptide is Elongation factor P (Desulfatibacillum aliphaticivorans).